The sequence spans 396 residues: Elongation factor Tu (396 aa).

In terms of domain architecture, tr-type G spans 10-206 (KPHCNIGTIG…AVDAYIPQPE (197 aa)). The segment at 19-26 (GHVDHGKT) is G1. Residue 19–26 (GHVDHGKT) coordinates GTP. Mg(2+) is bound at residue Thr-26. The tract at residues 60-64 (GITIS) is G2. The G3 stretch occupies residues 81 to 84 (DCPG). GTP-binding positions include 81–85 (DCPGH) and 136–139 (NKVD). A G4 region spans residues 136–139 (NKVD). The segment at 174–176 (SAL) is G5.

This sequence belongs to the TRAFAC class translation factor GTPase superfamily. Classic translation factor GTPase family. EF-Tu/EF-1A subfamily. As to quaternary structure, monomer.

The protein localises to the cytoplasm. The catalysed reaction is GTP + H2O = GDP + phosphate + H(+). GTP hydrolase that promotes the GTP-dependent binding of aminoacyl-tRNA to the A-site of ribosomes during protein biosynthesis. This chain is Elongation factor Tu, found in Parvibaculum lavamentivorans (strain DS-1 / DSM 13023 / NCIMB 13966).